The chain runs to 75 residues: Large ribosomal subunit protein uL30 (75 aa).

It belongs to the universal ribosomal protein uL30 family. Part of the 50S ribosomal subunit.

The polypeptide is Large ribosomal subunit protein uL30 (Roseiflexus castenholzii (strain DSM 13941 / HLO8)).